A 189-amino-acid chain; its full sequence is Large ribosomal subunit protein bL12c (189 aa).

2 disordered regions span residues 1–30 and 165–189; these read MAAT…HPQP and EGVS…VSIV. The transit peptide at 1 to 56 directs the protein to the chloroplast; sequence MAATTTMATLNLPSLTSHPNSSTFPKHPQPLQFPFRTTTNPISLSSTRTTRLRPIA. Over residues 11–24 the composition is skewed to polar residues; the sequence is NLPSLTSHPNSSTF. Residues 165–183 are compositionally biased toward basic and acidic residues; the sequence is EGVSKDDAEDAKKQLEDAG.

In terms of assembly, component of the chloroplast large ribosomal subunit (LSU). Mature 70S chloroplast ribosomes of higher plants consist of a small (30S) and a large (50S) subunit. The 30S small subunit contains 1 molecule of ribosomal RNA (16S rRNA) and 24 different proteins. The 50S large subunit contains 3 rRNA molecules (23S, 5S and 4.5S rRNA) and 33 different proteins.

The protein resides in the plastid. Its subcellular location is the chloroplast. Functionally, component of the chloroplast ribosome (chloro-ribosome), a dedicated translation machinery responsible for the synthesis of chloroplast genome-encoded proteins, including proteins of the transcription and translation machinery and components of the photosynthetic apparatus. The polypeptide is Large ribosomal subunit protein bL12c (RPL12) (Spinacia oleracea (Spinach)).